The sequence spans 191 residues: Small ribosomal subunit protein uS5 (191 aa).

The S5 DRBM domain occupies 21–84 (FADRLVAINR…EQAKRQMIRV (64 aa)). The tract at residues 155–191 (LRKESSPRSVAQRRGKKVADILPKVDAAPAPAETAEA) is disordered. Low complexity predominate over residues 181 to 191 (AAPAPAETAEA).

This sequence belongs to the universal ribosomal protein uS5 family. Part of the 30S ribosomal subunit. Contacts proteins S4 and S8.

With S4 and S12 plays an important role in translational accuracy. In terms of biological role, located at the back of the 30S subunit body where it stabilizes the conformation of the head with respect to the body. This Roseobacter denitrificans (strain ATCC 33942 / OCh 114) (Erythrobacter sp. (strain OCh 114)) protein is Small ribosomal subunit protein uS5.